We begin with the raw amino-acid sequence, 418 residues long: Cell division protein FtsA (418 aa).

It belongs to the FtsA/MreB family. Self-interacts. Interacts with FtsZ.

It localises to the cell inner membrane. In terms of biological role, cell division protein that is involved in the assembly of the Z ring. May serve as a membrane anchor for the Z ring. The protein is Cell division protein FtsA of Buchnera aphidicola subsp. Schizaphis graminum (strain Sg).